A 753-amino-acid polypeptide reads, in one-letter code: Bile salt-activated lipase (753 aa).

The signal sequence occupies residues 1–20; the sequence is MGRLQLVVLGLTCCWAVASA. The interval 21–121 is heparin-binding; sequence AKLGAVYTEG…KQVSRDLPVM (101 aa). Cysteine 84 and cysteine 100 are oxidised to a cystine. Asparagine 207 carries N-linked (GlcNAc...) (complex) asparagine glycosylation. The active-site Acyl-ester intermediate is serine 214. A disulfide bridge links cysteine 266 with cysteine 277. Active-site charge relay system residues include aspartate 340 and histidine 455. The tract at residues 555–753 is disordered; it reads QEATPVPPTG…EAQMPAVIRF (199 aa). Residues threonine 558, threonine 569, and threonine 579 are each glycosylated (O-linked (GalNAc...) threonine). Repeat copies occupy residues 559–569, 570–580, 581–591, 592–602, 603–613, 614–624, 625–635, 636–646, 647–657, 658–668, 669–679, 680–690, 691–701, 702–712, 713–723, 724–734, and 735–745. Residues 559–745 are 17 X 11 AA tandem repeats, glycodomain, O-linked (mucin type); the sequence is PVPPTGDSEA…VPPTDDSKEA (187 aa). O-linked (GalNAc...) threonine glycans are attached at residues threonine 607, threonine 618, threonine 629, threonine 640, threonine 651, threonine 662, and threonine 673. Pro residues predominate over residues 668-683; the sequence is PPVPPTGDAGPPPVPP.

It belongs to the type-B carboxylesterase/lipase family. In terms of assembly, interacts with CLC. N- and O-glycosylated. Mammary gland and pancreas. Detected in pancreatic and duodenal juice (at protein level). Expressed by eosinophils.

Its subcellular location is the secreted. The catalysed reaction is a triacylglycerol + H2O = a diacylglycerol + a fatty acid + H(+). It catalyses the reaction 1,2,3-tri-(9Z-octadecenoyl)-glycerol + H2O = di-(9Z)-octadecenoylglycerol + (9Z)-octadecenoate + H(+). The enzyme catalyses 1,2,3-trioctanoylglycerol + H2O = dioctanoylglycerol + octanoate + H(+). It carries out the reaction a sterol ester + H2O = a sterol + a fatty acid + H(+). The catalysed reaction is cholesteryl (9Z-octadecenoate) + H2O = cholesterol + (9Z)-octadecenoate + H(+). It catalyses the reaction an acetyl ester + H2O = an aliphatic alcohol + acetate + H(+). The enzyme catalyses a butanoate ester + H2O = an aliphatic alcohol + butanoate + H(+). It carries out the reaction 9-hexadecanoyloxy-octadecanoate + H2O = 9-hydroxy-octadecanoate + hexadecanoate + H(+). The catalysed reaction is 9-(9Z-octadecenoyloxy)-octadecanoate + H2O = 9-hydroxy-octadecanoate + (9Z)-octadecenoate + H(+). It catalyses the reaction 1-hexadecanoyl-sn-glycero-3-phosphocholine + H2O = sn-glycerol 3-phosphocholine + hexadecanoate + H(+). The enzyme catalyses 12-hexadecanoyloxy-octadecanoate + H2O = 12-hydroxyoctadecanoate + hexadecanoate + H(+). It carries out the reaction 12-(9Z-octadecenoyloxy)-octadecanoate + H2O = 12-hydroxyoctadecanoate + (9Z)-octadecenoate + H(+). The catalysed reaction is 13-(9Z-octadecenoyloxy)-octadecanoate + H2O = 13-hydroxy-octadecanoate + (9Z)-octadecenoate + H(+). It catalyses the reaction 9-(9Z-hexadecenoyloxy)-octadecanoate + H2O = (9Z)-hexadecenoate + 9-hydroxy-octadecanoate + H(+). The enzyme catalyses 12-(9Z-hexadecenoyloxy)-octadecanoate + H2O = 12-hydroxyoctadecanoate + (9Z)-hexadecenoate + H(+). It carries out the reaction 13-(9Z-hexadecenoyloxy)-octadecanoate + H2O = 13-hydroxy-octadecanoate + (9Z)-hexadecenoate + H(+). The catalysed reaction is 12-octadecanoyloxy-octadecanoate + H2O = 12-hydroxyoctadecanoate + octadecanoate + H(+). It catalyses the reaction 13-octadecanoyloxy-octadecanoate + H2O = 13-hydroxy-octadecanoate + octadecanoate + H(+). The enzyme catalyses 5-(9Z-hexadecenoyloxy)-octadecanoate + H2O = 5-hydroxy-octadecanoate + (9Z)-hexadecenoate + H(+). It carries out the reaction 9-octadecanoyloxy-octadecanoate + H2O = 9-hydroxy-octadecanoate + octadecanoate + H(+). Activated by bile salts such as sodium taurocholate. Catalyzes the hydrolysis of a wide range of substrates including cholesteryl esters, phospholipids, lysophospholipids, di- and tri-acylglycerols, and fatty acid esters of hydroxy fatty acids (FAHFAs). Preferentially hydrolyzes FAHFAs with the ester bond further away from the carboxylate. Unsaturated FAHFAs are hydrolyzed more quickly than saturated FAHFAs. Has an essential role in the complete digestion of dietary lipids and their intestinal absorption, along with the absorption of fat-soluble vitamins. In Homo sapiens (Human), this protein is Bile salt-activated lipase (CEL).